Reading from the N-terminus, the 373-residue chain is P2Y purinoceptor 1 (373 aa).

Over methionine 1–phenylalanine 51 the chain is Extracellular. N-linked (GlcNAc...) asparagine glycosylation is found at asparagine 11 and asparagine 27. 2 disulfides stabilise this stretch: cysteine 42/cysteine 296 and cysteine 124/cysteine 202. Lysine 46 contributes to the ADP binding site. Residues tyrosine 52–tryptophan 74 form a helical membrane-spanning segment. Residues methionine 75–serine 87 lie on the Cytoplasmic side of the membrane. The chain crosses the membrane as a helical span at residues valine 88 to phenylalanine 109. Over tyrosine 110 to lysine 125 the chain is Extracellular. N-linked (GlcNAc...) asparagine glycosylation is present at asparagine 113. The helical transmembrane segment at leucine 126–alanine 147 threads the bilayer. The Cytoplasmic segment spans residues histidine 148–lysine 166. The helical transmembrane segment at asparagine 167–phenylalanine 188 threads the bilayer. Over tyrosine 189–tyrosine 214 the chain is Extracellular. N-linked (GlcNAc...) asparagine glycosylation occurs at asparagine 197. Tyrosine 203 to threonine 205 provides a ligand contact to ADP. The helical transmembrane segment at phenylalanine 215–tyrosine 237 threads the bilayer. Residues glycine 238 to tyrosine 260 lie on the Cytoplasmic side of the membrane. Residues leucine 261–leucine 284 form a helical membrane-spanning segment. Residues asparagine 283–arginine 287, tyrosine 303–tyrosine 306, and arginine 310 each bind ADP. Residues arginine 285–tyrosine 303 lie on the Extracellular side of the membrane. Residues alanine 304–phenylalanine 325 traverse the membrane as a helical segment. The Cytoplasmic portion of the chain corresponds to leucine 326–leucine 373.

The protein belongs to the G-protein coupled receptor 1 family.

Its subcellular location is the cell membrane. In terms of biological role, receptor for extracellular adenine nucleotides such as ADP. In platelets, binding to ADP leads to mobilization of intracellular calcium ions via activation of phospholipase C, a change in platelet shape, and ultimately platelet aggregation. This Mus musculus (Mouse) protein is P2Y purinoceptor 1 (P2ry1).